A 251-amino-acid chain; its full sequence is Capsid protein (251 aa).

Positions 1–29 (MPKRDAPWRSMAGTSKVSRNANYSPRSGI) are disordered. Positions 3 to 20 (KRDAPWRSMAGTSKVSRN) match the Bipartite nuclear localization signal motif. Polar residues predominate over residues 12-25 (AGTSKVSRNANYSP). Residues 35-49 (KAAEWVNRPMYRKPR) carry the Nuclear localization signal motif. Residues 63-80 (CEGPCKVQSFEQRHDILH) fold into a zinc finger. The short motif at 96-117 (ITHRVGKRFCVKSVYILGKIWM) is the Nuclear export signal element. Residues 195–242 (RRFWKVNNHVVYNHQEAGKYENHTENALLLYMACTHASNPVYATLKIR) carry the Bipartite nuclear localization signal motif.

Belongs to the geminiviridae capsid protein family. In terms of assembly, homomultimer. Binds to single-stranded and double-stranded viral DNA. Interacts (via nuclear localization signals) with host importin alpha-1a.

It localises to the virion. The protein localises to the host nucleus. Its function is as follows. Encapsidates the viral DNA into characteristic twinned ('geminate') particles. Binds the genomic viral ssDNA and shuttles it into and out of the cell nucleus. The CP of bipartite geminiviruses is not required for cell-to-cell or systemic movement. The polypeptide is Capsid protein (Solanum tuberosum (Potato)).